Here is a 260-residue protein sequence, read N- to C-terminus: Hydroxyethylthiazole kinase 1 (260 aa).

Residue M39 coordinates substrate. ATP contacts are provided by R115 and T160. Residue G187 coordinates substrate.

It belongs to the Thz kinase family. Requires Mg(2+) as cofactor.

The enzyme catalyses 5-(2-hydroxyethyl)-4-methylthiazole + ATP = 4-methyl-5-(2-phosphooxyethyl)-thiazole + ADP + H(+). Its pathway is cofactor biosynthesis; thiamine diphosphate biosynthesis; 4-methyl-5-(2-phosphoethyl)-thiazole from 5-(2-hydroxyethyl)-4-methylthiazole: step 1/1. In terms of biological role, catalyzes the phosphorylation of the hydroxyl group of 4-methyl-5-beta-hydroxyethylthiazole (THZ). The polypeptide is Hydroxyethylthiazole kinase 1 (Streptococcus pneumoniae serotype 4 (strain ATCC BAA-334 / TIGR4)).